The primary structure comprises 321 residues: Lipoyl synthase (321 aa).

The [4Fe-4S] cluster site is built by cysteine 68, cysteine 73, cysteine 79, cysteine 94, cysteine 98, cysteine 101, and serine 308. The 218-residue stretch at 80–297 (FNHGTATFMI…KEVALELGFT (218 aa)) folds into the Radical SAM core domain.

It belongs to the radical SAM superfamily. Lipoyl synthase family. [4Fe-4S] cluster serves as cofactor.

The protein resides in the cytoplasm. It carries out the reaction [[Fe-S] cluster scaffold protein carrying a second [4Fe-4S](2+) cluster] + N(6)-octanoyl-L-lysyl-[protein] + 2 oxidized [2Fe-2S]-[ferredoxin] + 2 S-adenosyl-L-methionine + 4 H(+) = [[Fe-S] cluster scaffold protein] + N(6)-[(R)-dihydrolipoyl]-L-lysyl-[protein] + 4 Fe(3+) + 2 hydrogen sulfide + 2 5'-deoxyadenosine + 2 L-methionine + 2 reduced [2Fe-2S]-[ferredoxin]. It participates in protein modification; protein lipoylation via endogenous pathway; protein N(6)-(lipoyl)lysine from octanoyl-[acyl-carrier-protein]: step 2/2. Its function is as follows. Catalyzes the radical-mediated insertion of two sulfur atoms into the C-6 and C-8 positions of the octanoyl moiety bound to the lipoyl domains of lipoate-dependent enzymes, thereby converting the octanoylated domains into lipoylated derivatives. This Vibrio parahaemolyticus serotype O3:K6 (strain RIMD 2210633) protein is Lipoyl synthase.